A 152-amino-acid chain; its full sequence is Ribonuclease pancreatic (152 aa).

Positions methionine 1 to glycine 24 are cleaved as a signal peptide. Residues lysine 31 and arginine 34 each coordinate substrate. Catalysis depends on histidine 36, which acts as the Proton acceptor. Residue asparagine 46 is glycosylated (N-linked (GlcNAc...) asparagine). 4 disulfides stabilise this stretch: cysteine 50-cysteine 108, cysteine 64-cysteine 119, cysteine 82-cysteine 134, and cysteine 89-cysteine 96. Substrate contacts are provided by residues lysine 65–threonine 69, lysine 90, and arginine 109. A glycan (N-linked (GlcNAc...) asparagine) is linked at asparagine 112. Histidine 143 acts as the Proton donor in catalysis.

Belongs to the pancreatic ribonuclease family. Monomer. Interacts with and forms tight 1:1 complexes with RNH1. Dimerization of two such complexes may occur. Interaction with RNH1 inhibits this protein.

It is found in the secreted. The enzyme catalyses an [RNA] containing cytidine + H2O = an [RNA]-3'-cytidine-3'-phosphate + a 5'-hydroxy-ribonucleotide-3'-[RNA].. It catalyses the reaction an [RNA] containing uridine + H2O = an [RNA]-3'-uridine-3'-phosphate + a 5'-hydroxy-ribonucleotide-3'-[RNA].. In terms of biological role, endonuclease that catalyzes the cleavage of RNA on the 3' side of pyrimidine nucleotides. Acts on single-stranded and double-stranded RNA. The polypeptide is Ribonuclease pancreatic (RNASE1) (Papio hamadryas (Hamadryas baboon)).